A 202-amino-acid polypeptide reads, in one-letter code: MSRYRGPRLRVVRRLGELPGLSRKTPRRAYPPGQHGQGRRKRSEYAIRLEEKQKLLYNYGVTEKQLVRYMKKARRSTDSTGQKLLELLEMRLDNTVFRLGMAGTIPGARQLVNHGHVIVNGRVVNIASYQCRPGDVISVRNKDNSRRMVETNMQYPGLANLPDHLEFDKNTLTGKVNDVIKREWVALQINELLVVEYYSRKV.

The tract at residues 16-43 (GELPGLSRKTPRRAYPPGQHGQGRRKRS) is disordered. The S4 RNA-binding domain occupies 90–152 (MRLDNTVFRL…DNSRRMVETN (63 aa)).

The protein belongs to the universal ribosomal protein uS4 family. In terms of assembly, part of the 30S ribosomal subunit. Contacts protein S5. The interaction surface between S4 and S5 is involved in control of translational fidelity.

One of the primary rRNA binding proteins, it binds directly to 16S rRNA where it nucleates assembly of the body of the 30S subunit. In terms of biological role, with S5 and S12 plays an important role in translational accuracy. This is Small ribosomal subunit protein uS4 from Crocosphaera subtropica (strain ATCC 51142 / BH68) (Cyanothece sp. (strain ATCC 51142)).